Here is a 150-residue protein sequence, read N- to C-terminus: UPF0098 protein CPn_0877/CP_0992/CPj0877/CpB0906 (150 aa).

The protein belongs to the UPF0098 family.

The chain is UPF0098 protein CPn_0877/CP_0992/CPj0877/CpB0906 from Chlamydia pneumoniae (Chlamydophila pneumoniae).